We begin with the raw amino-acid sequence, 200 residues long: 3-isopropylmalate dehydratase small subunit (200 aa).

The protein belongs to the LeuD family. LeuD type 1 subfamily. In terms of assembly, heterodimer of LeuC and LeuD.

The enzyme catalyses (2R,3S)-3-isopropylmalate = (2S)-2-isopropylmalate. Its pathway is amino-acid biosynthesis; L-leucine biosynthesis; L-leucine from 3-methyl-2-oxobutanoate: step 2/4. Its function is as follows. Catalyzes the isomerization between 2-isopropylmalate and 3-isopropylmalate, via the formation of 2-isopropylmaleate. The protein is 3-isopropylmalate dehydratase small subunit of Serratia proteamaculans (strain 568).